Consider the following 1014-residue polypeptide: Chondroitin sulfate ABC exolyase (1014 aa).

The signal sequence occupies residues 1–14 (MLILSFLCPAFLNA). Ca(2+)-binding residues include Ser24, Glu26, Asp50, His53, and Asp161. Active-site proton acceptor residues include His345 and His454. Tyr461 serves as the catalytic Proton donor.

Belongs to the polysaccharide lyase 8 family. As to quaternary structure, monomer. The cofactor is Ca(2+). Mg(2+) serves as cofactor.

Its subcellular location is the periplasm. The enzyme catalyses Exolytic removal of Delta(4)-unsaturated disaccharide residues from the non-reducing ends of both polymeric chondroitin/dermatan sulfates and their oligosaccharide fragments.. Its activity is regulated as follows. Specific activity for chondroitin sulfate substrates increases moderately (2-fold) while an increase of 25-fold is observed for dermatan sulfate as substrate upon addition of Ca(2+) or Mg(2+) ions. Increasing the concentration of Na(+), K(+) or Cs(+) chloride from 0 to 0.1 M, increases the activity against all substrates. Further increases in salt concentration reduces the activity dramatically, with 50% inhibition occurring at 0.15 M and nearly complete inhibition at 0.4 M salt. The addition of 10 mM Ca(2+) or Mg(2+) ions increases the activity against chondroitin 4- and 6-sulfates by 2-3-fold, while the activity against dermatan sulfate increases much more significantly by 50-fold. Addition of Mn(2+) and Zn(2+) reduces activity against chondroitin sulfate substrates, but increases the activity against dermatan sulfate. Increasing the concentration of CaCl(2) with both chondroitin 4- and 6-sulfates from 0 to 0.04 M increases the activity. A further increase reduces activity, with 50% inhibition at 0.065-0.085 M and a complete inhibition of the reaction at 0.2 M. In case of dermatan sulfate, the addition of low concentration of CaCl(2) dramatically increases the activity from the basal level. The maximal activity is reached at 0.01 M CaCl(2). Its function is as follows. Broad-specificity glycosaminoglycan lyase, which acts in an exolytic fashion degrading chondroitin sulfates and dermatan sulfate to yield only disaccharide products. Has a preference for chondroitin 4-sulfate over chondroitin 6-sulfate. Has extremely low activity against hyaluronic acid. Is not active against acharan sulfate, heparin or heparan sulfate. The polypeptide is Chondroitin sulfate ABC exolyase (chonabc) (Bacteroides thetaiotaomicron).